Consider the following 186-residue polypeptide: Pyridoxal 5'-phosphate synthase subunit PdxT (186 aa).

Gly-46 to Ser-48 is an L-glutamine binding site. The Nucleophile role is filled by Cys-75. L-glutamine is bound by residues Arg-101 and Ile-128–Arg-129. Residues His-165 and Glu-167 each act as charge relay system in the active site.

Belongs to the glutaminase PdxT/SNO family. As to quaternary structure, in the presence of PdxS, forms a dodecamer of heterodimers. Only shows activity in the heterodimer.

It carries out the reaction aldehydo-D-ribose 5-phosphate + D-glyceraldehyde 3-phosphate + L-glutamine = pyridoxal 5'-phosphate + L-glutamate + phosphate + 3 H2O + H(+). The enzyme catalyses L-glutamine + H2O = L-glutamate + NH4(+). Its pathway is cofactor biosynthesis; pyridoxal 5'-phosphate biosynthesis. Its function is as follows. Catalyzes the hydrolysis of glutamine to glutamate and ammonia as part of the biosynthesis of pyridoxal 5'-phosphate. The resulting ammonia molecule is channeled to the active site of PdxS. In Methanocaldococcus jannaschii (strain ATCC 43067 / DSM 2661 / JAL-1 / JCM 10045 / NBRC 100440) (Methanococcus jannaschii), this protein is Pyridoxal 5'-phosphate synthase subunit PdxT.